We begin with the raw amino-acid sequence, 616 residues long: Homeodomain-interacting protein kinase 4 (616 aa).

The Protein kinase domain maps to 11 to 347; the sequence is YDIIEVLGKG…PSAALRHPFV (337 aa). ATP is bound by residues 17 to 25 and K40; that span reads LGKGTFGEV. Catalysis depends on D136, which acts as the Proton acceptor. Residues 485–616 are disordered; that stretch reads RHKARKPPAG…SFLQHVTGHH (132 aa). The segment covering 496–511 has biased composition (polar residues); that stretch reads KSDSNLSNLIRLSQVS. At S511 the chain carries Phosphoserine.

Belongs to the protein kinase superfamily. CMGC Ser/Thr protein kinase family. HIPK subfamily. In terms of processing, autophosphorylated.

The protein localises to the cytoplasm. The catalysed reaction is L-seryl-[protein] + ATP = O-phospho-L-seryl-[protein] + ADP + H(+). The enzyme catalyses L-threonyl-[protein] + ATP = O-phospho-L-threonyl-[protein] + ADP + H(+). In terms of biological role, protein kinase that phosphorylates TP53, and thus induces TP53 repression of BIRC5 promoter. May act as a corepressor of transcription factors (Potential). This chain is Homeodomain-interacting protein kinase 4 (HIPK4), found in Macaca fascicularis (Crab-eating macaque).